Here is a 483-residue protein sequence, read N- to C-terminus: BTB/POZ domain and ankyrin repeat-containing protein NBCL (483 aa).

Residues 25–109 enclose the BTB domain; the sequence is SDVTFSVEGR…LYSGQVSIVP (85 aa). The C2HC NPR-type zinc finger occupies 115-129; that stretch reads RPNCGERACWHTHCT. Positions 118, 123, 125, and 128 each coordinate Zn(2+). 4 ANK repeats span residues 254 to 283, 284 to 313, 318 to 347, and 351 to 385; these read QKIRRMRRALDSSDVELVKLMVMGEGLNLD, EALALPYAVENCSREVVKALLELGAADVNY, SGKTPLHIAAEMVSPDMVAVLLDHHADPNV, and DGVTPLDILRTLTSDFLFKGAVPGLTHIEPNKLRL. The segment at 401–437 is disordered; that stretch reads EGNANANSSNNNNAPCSAATPIYPPMNEDHNSSSSNA. The segment covering 403-419 has biased composition (low complexity); sequence NANANSSNNNNAPCSAA.

It belongs to the plant 'ANKYRIN-BTB/POZ' family. 'NOOT-BOP-COCH-like' (NBCL) subfamily. In terms of assembly, homodimer. Interacts with APP1 around the plasma membrane and in the nucleus; this interaction disturbs APP1-mediated regulation of the nuclear transcription factor Y subunit (NF-YA1). Mainly expressed in root nodules, to a lesser extent in shoot apical meristems (SAM) and root meristems (RM), and barely in leaves, non-nodulating roots and root apical meristems (RAM).

The protein resides in the nucleus. It is found in the cytoplasm. Its subcellular location is the cell membrane. It functions in the pathway protein modification; protein ubiquitination. Its function is as follows. May act as a substrate-specific adapter of an E3 ubiquitin-protein ligase complex (CUL3-RBX1-BTB) which mediates the ubiquitination and subsequent proteasomal degradation of target proteins. Transcriptional co-regulator involved in the promotion of leaf and floral meristem fate and determinacy. Required for the abscission of senescent organs, probably by regulating the cell wall disorganization in abscission zones (AZs, e.g. pulvini at the base of leaves). Involved in the coordination of the symbiotic nodule developmental program; promotes the formation of root nodules by interacting directly with APP1 to modulate the expression of the nuclear transcription factor Y subunit (NF-YA1), a key nodulin. Necessary for the robust maintenance of nodule identity throughout the nodule developmental program. The sequence is that of BTB/POZ domain and ankyrin repeat-containing protein NBCL from Lotus japonicus (Lotus corniculatus var. japonicus).